Here is a 193-residue protein sequence, read N- to C-terminus: MAQSDITIDALDKVGRQDAEYLVSLVRSIPGFPKEGIIFRDFIPVFADPKGLRILLEALEAALPVPASEFDSIAGLESRGFLFGPALAARMGKGFIAVRKAGKLPPETIGESYDLEYGSARVEIETDAVQAGERVLIVDDLIATGGTAKAATDLIDKVGGTVAGYGFVMRLEGLDGIDKLGGKPVSSLMAMPA.

It belongs to the purine/pyrimidine phosphoribosyltransferase family. In terms of assembly, homodimer.

The protein localises to the cytoplasm. The catalysed reaction is AMP + diphosphate = 5-phospho-alpha-D-ribose 1-diphosphate + adenine. It participates in purine metabolism; AMP biosynthesis via salvage pathway; AMP from adenine: step 1/1. In terms of biological role, catalyzes a salvage reaction resulting in the formation of AMP, that is energically less costly than de novo synthesis. The protein is Adenine phosphoribosyltransferase of Bifidobacterium longum subsp. infantis (strain ATCC 15697 / DSM 20088 / JCM 1222 / NCTC 11817 / S12).